Consider the following 253-residue polypeptide: MTVVPGAPSRPASAVSRPSYRQCVQASAQTSARRYSFPSYRRPPAEKLVFPVLLGILTLLLSACQTASASGYNEPRGYDRATLKLVFSMDLGMCLNRFTYDSKLAPSRPQVVACDSREARIRNDGFHANAPSCMRIDYELITQNHRAYYCLKYLVRVGYCYPAVTTPGKPPSVLLYAPSACDESLPSPRVATALVPGTRSANREFSRFVVTEIKSLGAGGRCDSASVSLQPPEEIEGPAIPPASSQLVCVAPK.

This is an uncharacterized protein from Mycobacterium bovis (strain ATCC BAA-935 / AF2122/97).